Here is a 493-residue protein sequence, read N- to C-terminus: Alpha-amylase-related protein (493 aa).

The first 19 residues, 1 to 19 (MFKFALTQTLCLAGSLSLA), serve as a signal peptide directing secretion. Gln20 is modified (pyrrolidone carboxylic acid). Cys47 and Cys103 form a disulfide bridge. Asn117, Gln168, and Asp177 together coordinate Ca(2+). Cys156 and Cys170 are disulfide-bonded. Arg205 contacts chloride. Asp207 acts as the Nucleophile in catalysis. His211 serves as a coordination point for Ca(2+). Glu244 functions as the Proton donor in the catalytic mechanism. Chloride is bound by residues Asn307 and Arg342. Cystine bridges form between Cys375-Cys381, Cys417-Cys440, and Cys447-Cys459.

This sequence belongs to the glycosyl hydrolase 13 family. As to quaternary structure, monomer. Ca(2+) is required as a cofactor. The cofactor is chloride.

Its subcellular location is the secreted. The enzyme catalyses Endohydrolysis of (1-&gt;4)-alpha-D-glucosidic linkages in polysaccharides containing three or more (1-&gt;4)-alpha-linked D-glucose units.. The sequence is that of Alpha-amylase-related protein (Amyrel) from Drosophila mauritiana (Fruit fly).